The primary structure comprises 201 residues: Holliday junction branch migration complex subunit RuvA (201 aa).

Positions 1 to 64 (MIGRLYGKII…EDAHLLFGFA (64 aa)) are domain I. The domain II stretch occupies residues 65 to 143 (QKQDRTLFRE…GIAQTDFFVE (79 aa)). A flexible linker region spans residues 144-154 (HSHETMVATYE). The domain III stretch occupies residues 154–201 (EIDASEEARDALLALGYKLTDAEKMIKKVHKSGATSEQLIRDALKASL).

It belongs to the RuvA family. Homotetramer. Forms an RuvA(8)-RuvB(12)-Holliday junction (HJ) complex. HJ DNA is sandwiched between 2 RuvA tetramers; dsDNA enters through RuvA and exits via RuvB. An RuvB hexamer assembles on each DNA strand where it exits the tetramer. Each RuvB hexamer is contacted by two RuvA subunits (via domain III) on 2 adjacent RuvB subunits; this complex drives branch migration. In the full resolvosome a probable DNA-RuvA(4)-RuvB(12)-RuvC(2) complex forms which resolves the HJ.

It is found in the cytoplasm. Functionally, the RuvA-RuvB-RuvC complex processes Holliday junction (HJ) DNA during genetic recombination and DNA repair, while the RuvA-RuvB complex plays an important role in the rescue of blocked DNA replication forks via replication fork reversal (RFR). RuvA specifically binds to HJ cruciform DNA, conferring on it an open structure. The RuvB hexamer acts as an ATP-dependent pump, pulling dsDNA into and through the RuvAB complex. HJ branch migration allows RuvC to scan DNA until it finds its consensus sequence, where it cleaves and resolves the cruciform DNA. This Haemophilus ducreyi (strain 35000HP / ATCC 700724) protein is Holliday junction branch migration complex subunit RuvA.